The following is a 213-amino-acid chain: Orotate phosphoribosyltransferase (213 aa).

5-phospho-alpha-D-ribose 1-diphosphate is bound at residue lysine 26. An orotate-binding site is contributed by 34–35; the sequence is FF. 5-phospho-alpha-D-ribose 1-diphosphate contacts are provided by residues 72 to 73, arginine 99, lysine 100, lysine 103, histidine 105, and 124 to 132; these read YK and DDVITAGTA. Orotate is bound by residues threonine 128 and arginine 156.

It belongs to the purine/pyrimidine phosphoribosyltransferase family. PyrE subfamily. In terms of assembly, homodimer. It depends on Mg(2+) as a cofactor.

It carries out the reaction orotidine 5'-phosphate + diphosphate = orotate + 5-phospho-alpha-D-ribose 1-diphosphate. Its pathway is pyrimidine metabolism; UMP biosynthesis via de novo pathway; UMP from orotate: step 1/2. In terms of biological role, catalyzes the transfer of a ribosyl phosphate group from 5-phosphoribose 1-diphosphate to orotate, leading to the formation of orotidine monophosphate (OMP). This Pseudomonas syringae pv. tomato (strain ATCC BAA-871 / DC3000) protein is Orotate phosphoribosyltransferase.